Here is a 123-residue protein sequence, read N- to C-terminus: WAP four-disulfide core domain protein 5 (123 aa).

Positions 1–24 are cleaved as a signal peptide; it reads MRFGRLLLLAVLLAGVSQLPAVSG. 2 consecutive WAP domains span residues 27 to 74 and 75 to 121; these read KGEK…IPRV and SVKL…RDPV. Disulfide bonds link Cys-34–Cys-62, Cys-41–Cys-66, Cys-49–Cys-61, Cys-55–Cys-70, Cys-81–Cys-109, Cys-88–Cys-113, Cys-96–Cys-108, and Cys-102–Cys-117.

It localises to the secreted. In terms of biological role, putative acid-stable proteinase inhibitor. The chain is WAP four-disulfide core domain protein 5 (WFDC5) from Otolemur garnettii (Small-eared galago).